Consider the following 222-residue polypeptide: uncharacterized protein (222 aa).

A signal peptide spans 1–20; it reads MRTTSFAKVAALCGLLALSG. A lipid anchor (N-palmitoyl cysteine) is attached at Cys21. Residue Cys21 is the site of S-diacylglycerol cysteine attachment.

Its subcellular location is the cell membrane. This is an uncharacterized protein from Escherichia coli O157:H7.